Here is a 99-residue protein sequence, read N- to C-terminus: Prostate and testis expressed protein 14 (99 aa).

The N-terminal stretch at 1 to 21 (MGKNILLLLLGLSFVIGFLQA) is a signal peptide. Positions 22–99 (LRCLECDMLN…CHDQSLCNEF (78 aa)) constitute a UPAR/Ly6 domain. 5 cysteine pairs are disulfide-bonded: cysteine 24–cysteine 51, cysteine 27–cysteine 36, cysteine 43–cysteine 69, cysteine 73–cysteine 89, and cysteine 90–cysteine 96. Asparagine 40 is a glycosylation site (N-linked (GlcNAc...) asparagine). N-linked (GlcNAc...) asparagine glycans are attached at residues asparagine 75 and asparagine 82.

This sequence belongs to the PATE family. As to quaternary structure, monomer.

It localises to the secreted. The chain is Prostate and testis expressed protein 14 from Rattus norvegicus (Rat).